Consider the following 319-residue polypeptide: Ribonuclease Z (319 aa).

The Zn(2+) site is built by His62, His64, Asp66, His67, His139, Asp209, and His268. Asp66 acts as the Proton acceptor in catalysis.

It belongs to the RNase Z family. Homodimer. Zn(2+) serves as cofactor.

It catalyses the reaction Endonucleolytic cleavage of RNA, removing extra 3' nucleotides from tRNA precursor, generating 3' termini of tRNAs. A 3'-hydroxy group is left at the tRNA terminus and a 5'-phosphoryl group is left at the trailer molecule.. Functionally, zinc phosphodiesterase, which displays some tRNA 3'-processing endonuclease activity. Probably involved in tRNA maturation, by removing a 3'-trailer from precursor tRNA. This chain is Ribonuclease Z, found in Pseudomonas putida (strain ATCC 700007 / DSM 6899 / JCM 31910 / BCRC 17059 / LMG 24140 / F1).